The chain runs to 254 residues: uncharacterized protein (254 aa).

This is an uncharacterized protein from Acheta domesticus (House cricket).